The primary structure comprises 258 residues: Synaptosomal-associated protein 29 (258 aa).

The segment at 1–43 (MSAYPRSYNPFDEDAEDEDARPAPWSDSRDLADGPGAPADRQQ) is disordered. A phosphoserine mark is found at Ser65, Ser77, and Ser114. Residues 76–107 (VSAEELVRQRGALERTEKMVDKMEQDLKTSQK) adopt a coiled-coil conformation. 2 disordered regions span residues 127–147 (PAET…GRLK) and 161–188 (QASH…SSEA). Thr130 and Thr137 each carry phosphothreonine. Positions 131 to 142 (PSAQNGTLTPQP) are enriched in polar residues. 5 positions are modified to phosphoserine: Ser163, Ser182, Ser185, Ser204, and Ser210. The region spanning 196–258 (RACHQRIDSN…TSTERKVRQL (63 aa)) is the t-SNARE coiled-coil homology domain.

This sequence belongs to the SNAP-25 family. Forms a SNARE complex, composed of VAMP8, SNAP29 and STX17, involved in fusion of autophagosome with lysosome. Interacts with multiple syntaxins including STX6. Interacts with EIPR1. Interacts with STX17; this interaction is increased in the absence of TMEM39A.

It is found in the cytoplasm. The protein resides in the golgi apparatus membrane. It localises to the cytoplasmic vesicle. The protein localises to the autophagosome membrane. Its subcellular location is the cell projection. It is found in the cilium membrane. Its function is as follows. SNAREs, soluble N-ethylmaleimide-sensitive factor-attachment protein receptors, are essential proteins for fusion of cellular membranes. SNAREs localized on opposing membranes assemble to form a trans-SNARE complex, an extended, parallel four alpha-helical bundle that drives membrane fusion. SNAP29 is a SNARE involved in autophagy through the direct control of autophagosome membrane fusion with the lysososome membrane. Also plays a role in ciliogenesis by regulating membrane fusions. This is Synaptosomal-associated protein 29 from Bos taurus (Bovine).